The chain runs to 182 residues: Plasmolipin (182 aa).

Residues 1-35 (MAEFPSKVSTRTSSPAQGVGASVSALRPDLGFVRS) are Cytoplasmic-facing. Residue Ser-9 is modified to Phosphoserine. Residues 32 to 166 (FVRSALGVLA…SAFFSFQAWR (135 aa)) form the MARVEL domain. Residues 36-56 (ALGVLALLQLALGLLVWALIA) traverse the membrane as a helical segment. At 57-68 (DTPYHLYPAYGW) the chain is on the extracellular side. A helical transmembrane segment spans residues 69–89 (VMFVAVFLWLVTIVFFIIYLF). Residues 90-99 (QLHMKLYMVP) lie on the Cytoplasmic side of the membrane. Residues 100–120 (WPLVLLIFFVAATVLYITAFI) traverse the membrane as a helical segment. Residues 121–141 (ACAAAVDLTSLRGSRPYNQRS) are Extracellular-facing. A helical transmembrane segment spans residues 142-162 (AASFFACLVMIAYGVSAFFSF). Residues 163–182 (QAWRGVGSNAATSQMAGGYS) are Cytoplasmic-facing.

Belongs to the MAL family. As to quaternary structure, forms oligomers. Post-translationally, phosphorylated.

It localises to the membrane. It is found in the cell membrane. Its subcellular location is the myelin membrane. The protein localises to the apical cell membrane. Its function is as follows. Main component of the myelin sheath that plays an important role in myelin membrane biogenesis and myelination. Plays an essential function in apical endocytosis. Regulates epithelial development through the regulation of apical endocytosis. Part of the intracellular machinery that mediates basolateral-to-apical transport of ICAM-1, an essential adhesion receptor in epithelial cells, from the subapical compartment in hepatic epithelial cells. The protein is Plasmolipin (Pllp) of Mus musculus (Mouse).